Consider the following 355-residue polypeptide: Alkanal monooxygenase alpha chain (355 aa).

It belongs to the bacterial luciferase oxidoreductase family. Heterodimer of an alpha and a beta chain.

It carries out the reaction a long-chain fatty aldehyde + FMNH2 + O2 = a long-chain fatty acid + hnu + FMN + H2O + 2 H(+). In terms of biological role, light-emitting reaction in luminous bacteria. The sequence is that of Alkanal monooxygenase alpha chain (luxA) from Vibrio harveyi (Beneckea harveyi).